A 140-amino-acid polypeptide reads, in one-letter code: Nucleoside diphosphate kinase (140 aa).

Residues Lys11, Phe59, Arg87, Thr93, Arg104, and Asn114 each contribute to the ATP site. His117 acts as the Pros-phosphohistidine intermediate in catalysis.

Belongs to the NDK family. As to quaternary structure, homotetramer. It depends on Mg(2+) as a cofactor.

The protein resides in the cytoplasm. It catalyses the reaction a 2'-deoxyribonucleoside 5'-diphosphate + ATP = a 2'-deoxyribonucleoside 5'-triphosphate + ADP. The catalysed reaction is a ribonucleoside 5'-diphosphate + ATP = a ribonucleoside 5'-triphosphate + ADP. In terms of biological role, major role in the synthesis of nucleoside triphosphates other than ATP. The ATP gamma phosphate is transferred to the NDP beta phosphate via a ping-pong mechanism, using a phosphorylated active-site intermediate. In Bradyrhizobium sp. (strain ORS 278), this protein is Nucleoside diphosphate kinase.